A 264-amino-acid chain; its full sequence is Phosphate import ATP-binding protein PstB 1 (264 aa).

The ABC transporter domain occupies 20–259 (LETRDLNIFY…PKIKLTEDYI (240 aa)). 52-59 (GASGSGKS) is a binding site for ATP.

The protein belongs to the ABC transporter superfamily. Phosphate importer (TC 3.A.1.7) family. As to quaternary structure, the complex is composed of two ATP-binding proteins (PstB), two transmembrane proteins (PstC and PstA) and a solute-binding protein (PstS).

It localises to the cell membrane. It carries out the reaction phosphate(out) + ATP + H2O = ADP + 2 phosphate(in) + H(+). Functionally, part of the ABC transporter complex PstSACB involved in phosphate import. Responsible for energy coupling to the transport system. The protein is Phosphate import ATP-binding protein PstB 1 of Ligilactobacillus salivarius (strain UCC118) (Lactobacillus salivarius).